We begin with the raw amino-acid sequence, 342 residues long: GTPase Obg (342 aa).

The Obg domain maps to 1–159 (MQFIDRAEIE…RHLRLELKLL (159 aa)). An OBG-type G domain is found at 160-328 (AEVGIIGLPN…LLAKVWQQLE (169 aa)). GTP is bound by residues 166–173 (GLPNAGKS), 191–195 (FTTLI), 213–216 (DIPG), 280–283 (NKID), and 309–311 (SAV). Positions 173 and 193 each coordinate Mg(2+).

This sequence belongs to the TRAFAC class OBG-HflX-like GTPase superfamily. OBG GTPase family. Monomer. Mg(2+) is required as a cofactor.

It is found in the cytoplasm. An essential GTPase which binds GTP, GDP and possibly (p)ppGpp with moderate affinity, with high nucleotide exchange rates and a fairly low GTP hydrolysis rate. Plays a role in control of the cell cycle, stress response, ribosome biogenesis and in those bacteria that undergo differentiation, in morphogenesis control. In Microcystis aeruginosa (strain NIES-843 / IAM M-2473), this protein is GTPase Obg.